The following is a 54-amino-acid chain: Rubredoxin (54 aa).

Residues 2–52 (AKWVCKICGYIYDEDAGDPDNGISPGTKFEELPDDWVCPICGAPKSEFEKL) enclose the Rubredoxin-like domain. Fe cation is bound by residues Cys-6, Cys-9, Cys-39, and Cys-42.

It belongs to the rubredoxin family. It depends on Fe(3+) as a cofactor.

Rubredoxin is a small nonheme, iron protein lacking acid-labile sulfide. Its single Fe, chelated to 4 Cys, functions as an electron acceptor and may also stabilize the conformation of the molecule. This chain is Rubredoxin (rub), found in Pyrococcus furiosus (strain ATCC 43587 / DSM 3638 / JCM 8422 / Vc1).